Reading from the N-terminus, the 120-residue chain is Immunoglobulin kappa variable 2-24 (120 aa).

The first 19 residues, Met-1–Ser-19, serve as a signal peptide directing secretion. One can recognise an Ig-like domain in the interval Gly-20–Pro-120. A framework-1 region spans residues Asp-21–Cys-43. Cys-43 and Cys-113 form a disulfide bridge. The interval Arg-44–Ser-59 is complementarity-determining-1. The tract at residues Trp-60–Tyr-74 is framework-2. Residues Lys-75–Ser-81 are complementarity-determining-2. The framework-3 stretch occupies residues Gly-82–Cys-113. The tract at residues Met-114 to Pro-120 is complementarity-determining-3.

Immunoglobulins are composed of two identical heavy chains and two identical light chains; disulfide-linked.

Its subcellular location is the secreted. It localises to the cell membrane. V region of the variable domain of immunoglobulin light chains that participates in the antigen recognition. Immunoglobulins, also known as antibodies, are membrane-bound or secreted glycoproteins produced by B lymphocytes. In the recognition phase of humoral immunity, the membrane-bound immunoglobulins serve as receptors which, upon binding of a specific antigen, trigger the clonal expansion and differentiation of B lymphocytes into immunoglobulins-secreting plasma cells. Secreted immunoglobulins mediate the effector phase of humoral immunity, which results in the elimination of bound antigens. The antigen binding site is formed by the variable domain of one heavy chain, together with that of its associated light chain. Thus, each immunoglobulin has two antigen binding sites with remarkable affinity for a particular antigen. The variable domains are assembled by a process called V-(D)-J rearrangement and can then be subjected to somatic hypermutations which, after exposure to antigen and selection, allow affinity maturation for a particular antigen. The sequence is that of Immunoglobulin kappa variable 2-24 from Homo sapiens (Human).